A 316-amino-acid chain; its full sequence is tRNA dimethylallyltransferase (316 aa).

17-24 (GPTASGKT) is a binding site for ATP. 19–24 (TASGKT) is a binding site for substrate. Interaction with substrate tRNA regions lie at residues 42–45 (DSAL), 166–170 (QRLSR), and 247–252 (RCVGYR).

This sequence belongs to the IPP transferase family. Monomer. Mg(2+) serves as cofactor.

It catalyses the reaction adenosine(37) in tRNA + dimethylallyl diphosphate = N(6)-dimethylallyladenosine(37) in tRNA + diphosphate. Catalyzes the transfer of a dimethylallyl group onto the adenine at position 37 in tRNAs that read codons beginning with uridine, leading to the formation of N6-(dimethylallyl)adenosine (i(6)A). The polypeptide is tRNA dimethylallyltransferase (Salmonella typhi).